The following is a 301-amino-acid chain: Bifunctional protein FolD (301 aa).

NADP(+)-binding positions include 164-166 (GRS), Ser-191, and Ile-232.

Belongs to the tetrahydrofolate dehydrogenase/cyclohydrolase family. In terms of assembly, homodimer.

The catalysed reaction is (6R)-5,10-methylene-5,6,7,8-tetrahydrofolate + NADP(+) = (6R)-5,10-methenyltetrahydrofolate + NADPH. It carries out the reaction (6R)-5,10-methenyltetrahydrofolate + H2O = (6R)-10-formyltetrahydrofolate + H(+). The protein operates within one-carbon metabolism; tetrahydrofolate interconversion. Catalyzes the oxidation of 5,10-methylenetetrahydrofolate to 5,10-methenyltetrahydrofolate and then the hydrolysis of 5,10-methenyltetrahydrofolate to 10-formyltetrahydrofolate. The polypeptide is Bifunctional protein FolD (Borrelia garinii subsp. bavariensis (strain ATCC BAA-2496 / DSM 23469 / PBi) (Borreliella bavariensis)).